A 352-amino-acid chain; its full sequence is DNA polymerase IV (352 aa).

Positions 4 to 185 (IIHVDMDCFF…LPLSKIPGVG (182 aa)) constitute a UmuC domain. Mg(2+) is bound by residues Asp-8 and Asp-103. The active site involves Glu-104.

The protein belongs to the DNA polymerase type-Y family. In terms of assembly, monomer. The cofactor is Mg(2+).

It is found in the cytoplasm. The enzyme catalyses DNA(n) + a 2'-deoxyribonucleoside 5'-triphosphate = DNA(n+1) + diphosphate. Poorly processive, error-prone DNA polymerase involved in untargeted mutagenesis. Copies undamaged DNA at stalled replication forks, which arise in vivo from mismatched or misaligned primer ends. These misaligned primers can be extended by PolIV. Exhibits no 3'-5' exonuclease (proofreading) activity. May be involved in translesional synthesis, in conjunction with the beta clamp from PolIII. The polypeptide is DNA polymerase IV (Yersinia enterocolitica serotype O:8 / biotype 1B (strain NCTC 13174 / 8081)).